Reading from the N-terminus, the 121-residue chain is MRLTMMKCKLHRATVTQADLHYEGSISIDRDYLEAAGILPHEQVDVLNINNGERFTTYAIEAPRGSRTFGINGAAARLAQVGDRIIVVAYAEMEAAEAEQHDPVVVLLDEHNKVIAKPQAA.

Ser-25 acts as the Schiff-base intermediate with substrate; via pyruvic acid in catalysis. Ser-25 bears the Pyruvic acid (Ser) mark. Thr-57 lines the substrate pocket. Tyr-58 acts as the Proton donor in catalysis. A substrate-binding site is contributed by 73 to 75 (GAA).

It belongs to the PanD family. Heterooctamer of four alpha and four beta subunits. It depends on pyruvate as a cofactor. In terms of processing, is synthesized initially as an inactive proenzyme, which is activated by self-cleavage at a specific serine bond to produce a beta-subunit with a hydroxyl group at its C-terminus and an alpha-subunit with a pyruvoyl group at its N-terminus.

It is found in the cytoplasm. The enzyme catalyses L-aspartate + H(+) = beta-alanine + CO2. It functions in the pathway cofactor biosynthesis; (R)-pantothenate biosynthesis; beta-alanine from L-aspartate: step 1/1. Functionally, catalyzes the pyruvoyl-dependent decarboxylation of aspartate to produce beta-alanine. The protein is Aspartate 1-decarboxylase of Maricaulis maris (strain MCS10) (Caulobacter maris).